Here is a 585-residue protein sequence, read N- to C-terminus: Eukaryotic translation initiation factor 3 subunit D (585 aa).

Residues 110–130 (GGGTVFRGRGQRGVGQRGGRA) show a composition bias toward gly residues. Positions 110 to 152 (GGGTVFRGRGQRGVGQRGGRAGFQRVGAGRGQGGDRYYDNRSA) are disordered. Residues 300–314 (SIDLVTVNENAADAP) are RNA gate. Positions 560 to 585 (VPPNTFEEDDEAAEEQEEKAEDESEE) are disordered. Positions 565–585 (FEEDDEAAEEQEEKAEDESEE) are enriched in acidic residues.

Belongs to the eIF-3 subunit D family. In terms of assembly, component of the eukaryotic translation initiation factor 3 (eIF-3) complex.

The protein resides in the cytoplasm. MRNA cap-binding component of the eukaryotic translation initiation factor 3 (eIF-3) complex, which is involved in protein synthesis of a specialized repertoire of mRNAs and, together with other initiation factors, stimulates binding of mRNA and methionyl-tRNAi to the 40S ribosome. The eIF-3 complex specifically targets and initiates translation of a subset of mRNAs involved in cell proliferation. In the eIF-3 complex, eif3d specifically recognizes and binds the 7-methylguanosine cap of a subset of mRNAs. The polypeptide is Eukaryotic translation initiation factor 3 subunit D (Aspergillus fumigatus (strain CBS 144.89 / FGSC A1163 / CEA10) (Neosartorya fumigata)).